The following is a 188-amino-acid chain: dTTP/UTP pyrophosphatase (188 aa).

Catalysis depends on aspartate 70, which acts as the Proton acceptor.

This sequence belongs to the Maf family. YhdE subfamily. Requires a divalent metal cation as cofactor.

The protein resides in the cytoplasm. The catalysed reaction is dTTP + H2O = dTMP + diphosphate + H(+). The enzyme catalyses UTP + H2O = UMP + diphosphate + H(+). Functionally, nucleoside triphosphate pyrophosphatase that hydrolyzes dTTP and UTP. May have a dual role in cell division arrest and in preventing the incorporation of modified nucleotides into cellular nucleic acids. The protein is dTTP/UTP pyrophosphatase of Clostridium beijerinckii (strain ATCC 51743 / NCIMB 8052) (Clostridium acetobutylicum).